Reading from the N-terminus, the 189-residue chain is uncharacterized protein (189 aa).

This is an uncharacterized protein from Saccharomyces cerevisiae (strain ATCC 204508 / S288c) (Baker's yeast).